The chain runs to 994 residues: Chloride channel protein E (994 aa).

The tract at residues 1 to 33 (MTRKENEESESLSSSSSPIDNSNNNNNNNNHSI) is disordered. Over 1–163 (MTRKENEESE…HWLGKERIST (163 aa)) the chain is Cytoplasmic. Over residues 11–32 (SLSSSSSPIDNSNNNNNNNNHS) the composition is skewed to low complexity. 11 helical membrane passes run 164–184 (LLFI…CDFL), 227–247 (IVFV…ISFI), 271–291 (VLGF…SAAG), 300–320 (FMHA…FGAI), 334–354 (ALTS…LFAI), 362–382 (VMGN…IFFL), 410–430 (LITF…FVFI), 449–469 (IILV…AGPL), 505–525 (LLVF…LPIP), 527–547 (GAIT…GEIL), and 554–574 (QAIE…SGTI). A CBS 1 domain is found at 644–705 (MKKNINYLSM…LDIHIENIEQ (62 aa)). Disordered regions lie at residues 715–767 (FVNN…NSEN), 802–822 (IKPN…SDFE), and 846–872 (DENS…GDGI). Low complexity-rich tracts occupy residues 717 to 764 (NNNN…NSNN) and 809 to 822 (SSSN…SDFE). Residues 859–870 (HDDEDDDEEEGD) show a composition bias toward acidic residues. The 51-residue stretch at 944 to 994 (MDLAPSQVPDLTPLNKVFHLFTMLGLGFTYVTSLGKLVGVITKNSLMEQDL) folds into the CBS 2 domain.

The protein belongs to the chloride channel (TC 2.A.49) family.

Its subcellular location is the membrane. In terms of biological role, voltage-gated chloride channel. Chloride channels may have several functions including the regulation of cell volume, membrane potential stabilization and signal transduction. The chain is Chloride channel protein E (clcE) from Dictyostelium discoideum (Social amoeba).